A 296-amino-acid polypeptide reads, in one-letter code: tRNA uridine(34) hydroxylase (296 aa).

Residues 130–225 (RGDDVVFFDG…YGEAYGNDGY (96 aa)) form the Rhodanese domain. The Cysteine persulfide intermediate role is filled by C185.

The protein belongs to the TrhO family.

The catalysed reaction is uridine(34) in tRNA + AH2 + O2 = 5-hydroxyuridine(34) in tRNA + A + H2O. Functionally, catalyzes oxygen-dependent 5-hydroxyuridine (ho5U) modification at position 34 in tRNAs. The polypeptide is tRNA uridine(34) hydroxylase (Corynebacterium kroppenstedtii (strain DSM 44385 / JCM 11950 / CIP 105744 / CCUG 35717)).